The primary structure comprises 87 residues: MARVTVEDCLEHVENRFELVMLSTKRARQLATGGKEPLVQWENDKPTVVALREIAEGLMSYEFIAEQEIVHEDPVFAAFEDESNEAV.

This sequence belongs to the RNA polymerase subunit omega family. The RNAP catalytic core consists of 2 alpha, 1 beta, 1 beta' and 1 omega subunit. When a sigma factor is associated with the core the holoenzyme is formed, which can initiate transcription.

It carries out the reaction RNA(n) + a ribonucleoside 5'-triphosphate = RNA(n+1) + diphosphate. In terms of biological role, promotes RNA polymerase assembly. Latches the N- and C-terminal regions of the beta' subunit thereby facilitating its interaction with the beta and alpha subunits. This is DNA-directed RNA polymerase subunit omega from Pseudomonas fluorescens (strain Pf0-1).